Here is a 465-residue protein sequence, read N- to C-terminus: Ribosomal protein uS12 methylthiotransferase RimO (465 aa).

An MTTase N-terminal domain is found at 1–117 (MKVGFISLGC…IVDICEGMPP (117 aa)). Residues cysteine 10, cysteine 46, cysteine 80, cysteine 150, cysteine 154, and cysteine 157 each coordinate [4Fe-4S] cluster. A Radical SAM core domain is found at 136–369 (ATPRHFAYMK…AIQRKIARAR (234 aa)). The TRAM domain maps to 371–442 (RGLVGKEVPV…DYDVVGTLLA (72 aa)).

This sequence belongs to the methylthiotransferase family. RimO subfamily. Requires [4Fe-4S] cluster as cofactor.

The protein localises to the cytoplasm. It carries out the reaction L-aspartate(89)-[ribosomal protein uS12]-hydrogen + (sulfur carrier)-SH + AH2 + 2 S-adenosyl-L-methionine = 3-methylsulfanyl-L-aspartate(89)-[ribosomal protein uS12]-hydrogen + (sulfur carrier)-H + 5'-deoxyadenosine + L-methionine + A + S-adenosyl-L-homocysteine + 2 H(+). Functionally, catalyzes the methylthiolation of an aspartic acid residue of ribosomal protein uS12. In Solibacter usitatus (strain Ellin6076), this protein is Ribosomal protein uS12 methylthiotransferase RimO.